We begin with the raw amino-acid sequence, 311 residues long: Manganese-dependent inorganic pyrophosphatase (311 aa).

Mn(2+) is bound by residues His10, Asp14, Asp16, Asp75, His97, and Asp149.

This sequence belongs to the PPase class C family. In terms of assembly, homodimer. The cofactor is Mn(2+).

The enzyme catalyses diphosphate + H2O = 2 phosphate + H(+). The sequence is that of Manganese-dependent inorganic pyrophosphatase (ppaC) from Methanothrix thermoacetophila (strain DSM 6194 / JCM 14653 / NBRC 101360 / PT) (Methanosaeta thermophila).